Here is an 836-residue protein sequence, read N- to C-terminus: Conserved oligomeric Golgi complex subunit 7 (836 aa).

Coiled-coil stretches lie at residues 29–49 and 107–127; these read QDSL…ASEE and LARV…LQDA. Residues 246-265 are disordered; sequence KLANERSESQRLSSGDEFQS.

It belongs to the COG7 family. As to quaternary structure, component of the conserved oligomeric Golgi complex which is composed of eight different subunits and is required for normal Golgi morphology and localization. Interacts with COG5 and COG6.

The protein resides in the golgi apparatus membrane. In terms of biological role, required for normal Golgi function. Necessary for embryo development and pigmentation, especially for the expansion of cells and organs, and for the formation of the organized shoot apical meristem (SAM). Probably involved in the generation of the extra-cellular matrix. This Arabidopsis thaliana (Mouse-ear cress) protein is Conserved oligomeric Golgi complex subunit 7.